Here is a 526-residue protein sequence, read N- to C-terminus: Arp2/3 complex-activating protein rickA (526 aa).

Positions 305-356 are disordered; it reads TTSSIAKPLENNVTPPPPLTKNNIPPPPPPPPLSKNNILPPPPPPMPTMAPA. Pro residues predominate over residues 318–352; the sequence is TPPPPLTKNNIPPPPPPPPLSKNNILPPPPPPMPT. WH2 domains lie at 383-400 and 410-427; these read DTSD…LRKV and SRDL…LRKV. Disordered regions lie at residues 425–452 and 464–526; these read RKVE…SKPN and MEMS…FVRS. The segment at 448–484 is central and acidic domains; the sequence is VSKPNGVASILARRVAMEMSDSSSSSGSESDSGNWSD. A compositionally biased stretch (low complexity) spans 464–480; sequence MEMSDSSSSSGSESDSG. Polar residues-rich tracts occupy residues 481–491 and 506–526; these read NWSDASVNSNK and TTHA…FVRS.

As to quaternary structure, homodimer.

It localises to the cell surface. In terms of biological role, recruits and activates the Arp2/3 complex, which in turn leads to actin polymerization, promoting Rickettsia motility during infection. The sequence is that of Arp2/3 complex-activating protein rickA (rickA) from Rickettsia felis (strain ATCC VR-1525 / URRWXCal2) (Rickettsia azadi).